Consider the following 350-residue polypeptide: Ferredoxin--NADP reductase (350 aa).

Thr-25, Glu-44, Gln-52, Tyr-57, Val-97, Phe-132, Asp-298, and Ser-339 together coordinate FAD.

It belongs to the ferredoxin--NADP reductase type 2 family. As to quaternary structure, homodimer. The cofactor is FAD.

The catalysed reaction is 2 reduced [2Fe-2S]-[ferredoxin] + NADP(+) + H(+) = 2 oxidized [2Fe-2S]-[ferredoxin] + NADPH. This is Ferredoxin--NADP reductase from Chlorobium limicola (strain DSM 245 / NBRC 103803 / 6330).